We begin with the raw amino-acid sequence, 227 residues long: 7-cyano-7-deazaguanine synthase (227 aa).

Residue 7–17 (LSGGLDSSTIL) participates in ATP binding. Cys-191, Cys-199, Cys-202, and Cys-205 together coordinate Zn(2+).

The protein belongs to the QueC family. Zn(2+) serves as cofactor.

It carries out the reaction 7-carboxy-7-deazaguanine + NH4(+) + ATP = 7-cyano-7-deazaguanine + ADP + phosphate + H2O + H(+). Its pathway is purine metabolism; 7-cyano-7-deazaguanine biosynthesis. Its function is as follows. Catalyzes the ATP-dependent conversion of 7-carboxy-7-deazaguanine (CDG) to 7-cyano-7-deazaguanine (preQ(0)). The protein is 7-cyano-7-deazaguanine synthase of Trichormus variabilis (strain ATCC 29413 / PCC 7937) (Anabaena variabilis).